The primary structure comprises 306 residues: Putative S-adenosyl-L-methionine-dependent methyltransferase FRAAL5401 (306 aa).

S-adenosyl-L-methionine is bound by residues D126 and 155–156; that span reads DL. The disordered stretch occupies residues 201-225; it reads LSAPESRVATENRPNPKPGDEDRTK.

The protein belongs to the UPF0677 family.

In terms of biological role, exhibits S-adenosyl-L-methionine-dependent methyltransferase activity. The chain is Putative S-adenosyl-L-methionine-dependent methyltransferase FRAAL5401 from Frankia alni (strain DSM 45986 / CECT 9034 / ACN14a).